A 186-amino-acid chain; its full sequence is MADQAYEPRLKTEYRERIRKSLKDRFGYSNEMQIPKLEKIVINMGVGEAVADSKKIQSAMADLAKIAGQKPVSTKARTSIAGFKLREGMTVGCKVTLRKDRMYEFLDRLITIALPRVKDFRGLKPTSFDGRGNYAMGLKEHIVFPEINYDQIDQIWGMDIIVTTTAKTDDEARELLKEFQFPFVQQ.

The protein belongs to the universal ribosomal protein uL5 family. Part of the 50S ribosomal subunit; part of the 5S rRNA/L5/L18/L25 subcomplex. Contacts the 5S rRNA and the P site tRNA. Forms a bridge to the 30S subunit in the 70S ribosome.

Functionally, this is one of the proteins that bind and probably mediate the attachment of the 5S RNA into the large ribosomal subunit, where it forms part of the central protuberance. In the 70S ribosome it contacts protein S13 of the 30S subunit (bridge B1b), connecting the 2 subunits; this bridge is implicated in subunit movement. Contacts the P site tRNA; the 5S rRNA and some of its associated proteins might help stabilize positioning of ribosome-bound tRNAs. The chain is Large ribosomal subunit protein uL5 from Phenylobacterium zucineum (strain HLK1).